The primary structure comprises 183 residues: Adenine phosphoribosyltransferase (183 aa).

It belongs to the purine/pyrimidine phosphoribosyltransferase family. Homodimer.

It is found in the cytoplasm. It catalyses the reaction AMP + diphosphate = 5-phospho-alpha-D-ribose 1-diphosphate + adenine. It functions in the pathway purine metabolism; AMP biosynthesis via salvage pathway; AMP from adenine: step 1/1. Functionally, catalyzes a salvage reaction resulting in the formation of AMP, that is energically less costly than de novo synthesis. This is Adenine phosphoribosyltransferase from Salmonella typhi.